Reading from the N-terminus, the 484-residue chain is PTS system N-acetylmuramic acid-specific EIIBC component (484 aa).

The PTS EIIB type-1 domain maps to 1–89 (MAKITSNTVS…NQLIDSLTSG (89 aa)). Catalysis depends on Cys-28, which acts as the Phosphocysteine intermediate; for EIIB activity. The 360-residue stretch at 125-484 (SKFATIFTPL…FFGCKDVDLS (360 aa)) folds into the PTS EIIC type-1 domain. A run of 10 helical transmembrane segments spans residues 127 to 147 (FATI…LLGF), 168 to 188 (LIAY…ILIG), 194 to 214 (AFGG…LGYN), 228 to 248 (FFGF…AAII), 266 to 286 (MILT…LIIM), 310 to 330 (AAIL…QGFV), 345 to 365 (LFPI…ALYF), 379 to 399 (GAII…VTLP), 409 to 429 (IGGA…LPVG), and 451 to 471 (IFPG…VGFL).

It is found in the cell inner membrane. The enzyme catalyses N-acetyl-beta-D-muramate(out) + N(pros)-phospho-L-histidyl-[protein] = N-acetyl-beta-D-muramate 6-phosphate(in) + L-histidyl-[protein]. Functionally, the phosphoenolpyruvate-dependent sugar phosphotransferase system (sugar PTS), a major carbohydrate active transport system, catalyzes the phosphorylation of incoming sugar substrates concomitantly with their translocation across the cell membrane. This system is involved in N-acetylmuramic acid (MurNAc) transport, yielding cytoplasmic MurNAc-6-P. Is also able to take up anhydro-N-acetylmuramic acid (anhMurNAc), but cannot phosphorylate the carbon 6, probably because of the 1,6-anhydro ring. This is PTS system N-acetylmuramic acid-specific EIIBC component (murP) from Vibrio parahaemolyticus serotype O3:K6 (strain RIMD 2210633).